The sequence spans 241 residues: Fatty acid metabolism regulator protein (241 aa).

In terms of domain architecture, HTH gntR-type spans 6 to 74 (KGPASFAEKY…HGKPTRVNNF (69 aa)). The H-T-H motif DNA-binding region spans 34–53 (ERELSELIGVTRTTLREVLQ).

As to quaternary structure, homodimer.

The protein resides in the cytoplasm. Functionally, multifunctional regulator of fatty acid metabolism. In Shewanella sp. (strain MR-4), this protein is Fatty acid metabolism regulator protein.